Consider the following 396-residue polypeptide: Multidrug resistance protein MdtL (396 aa).

Topologically, residues 1–4 (MFRY) are cytoplasmic. Residues 5–25 (LLCCFGLVLMYPTGIDMYLVG) traverse the membrane as a helical segment. Over 26 to 41 (LPQIANQLGATEAQLH) the chain is Periplasmic. A helical transmembrane segment spans residues 42–62 (IAFSVYLAGMATTMLFAGSLA). Over 63–64 (DR) the chain is Cytoplasmic. A helical membrane pass occupies residues 65–85 (IGRKPITLFSALLFALASYFA). At 86 to 92 (ARSQSSD) the chain is on the periplasmic side. Residues 93–113 (LFLVARFVQGVGAGCCYVVAF) form a helical membrane-spanning segment. At 114-131 (AILRDALDDKRRAKVLSM) the chain is on the cytoplasmic side. Residues 132–152 (VNGVTCIIPVIAPVIGHLIML) traverse the membrane as a helical segment. Residues 153–157 (RFPWP) lie on the Periplasmic side of the membrane. The helical transmembrane segment at 158–178 (SLFYTMAVMGLLVFGLCLFVL) threads the bilayer. The Cytoplasmic segment spans residues 179–209 (RETYSKASFHSQTLPRVQTESFKQGFFISRV). A helical transmembrane segment spans residues 210–230 (VITTLGVTTILSYVNVSPMLI). Residues 231–242 (MGQMGFDRGQYS) lie on the Periplasmic side of the membrane. The helical transmembrane segment at 243-263 (NTMAMTALVSMLASFSTPFLL) threads the bilayer. At 264-277 (NQFKEKSLILFSQT) the chain is on the cytoplasmic side. A run of 2 helical transmembrane segments spans residues 278 to 298 (LFAAAALVFILTQLGWLGQLF) and 299 to 319 (NLLGFGLVCSGFAIGFGVTMS). The Cytoplasmic portion of the chain corresponds to 320–333 (QALSPFVARAGVAS). Residues 334-354 (SLLGIAQVCTSALYIWVMGLL) traverse the membrane as a helical segment. The Periplasmic portion of the chain corresponds to 355–360 (EVSAIN). A helical transmembrane segment spans residues 361-381 (ILLAILAVGALISITLMLAVP). At 382-396 (KLSEMVANEQIPESA) the chain is on the cytoplasmic side.

Belongs to the major facilitator superfamily. DHA1 family. MdtL (TC 2.A.1.2.22) subfamily.

Its subcellular location is the cell inner membrane. The sequence is that of Multidrug resistance protein MdtL from Shewanella sp. (strain ANA-3).